Consider the following 225-residue polypeptide: 3-dehydroquinate dehydratase (225 aa).

3-dehydroquinate contacts are provided by residues serine 6, glutamate 30–arginine 32, and arginine 62. The active-site Proton donor/acceptor is histidine 118. The active-site Schiff-base intermediate with substrate is the lysine 143. Residues arginine 186, serine 205, and glutamine 209 each contribute to the 3-dehydroquinate site.

It belongs to the type-I 3-dehydroquinase family. Homodimer.

It carries out the reaction 3-dehydroquinate = 3-dehydroshikimate + H2O. The protein operates within metabolic intermediate biosynthesis; chorismate biosynthesis; chorismate from D-erythrose 4-phosphate and phosphoenolpyruvate: step 3/7. Its function is as follows. Involved in the third step of the chorismate pathway, which leads to the biosynthesis of aromatic amino acids. Catalyzes the cis-dehydration of 3-dehydroquinate (DHQ) and introduces the first double bond of the aromatic ring to yield 3-dehydroshikimate. This chain is 3-dehydroquinate dehydratase, found in Streptococcus sanguinis (strain SK36).